A 560-amino-acid polypeptide reads, in one-letter code: Protein yellow (560 aa).

A signal peptide spans 1–30 (MHVQDKGGIGALTALSLLLVAVTMVTPTQA). Asparagine 153 and asparagine 224 each carry an N-linked (GlcNAc...) asparagine glycan. Residues 452–492 (QYRPVLPQKPQTSWGPSPPSRSYLPSLGASPGGPGQVVSSV) form a disordered region. Residues 471-480 (SRSYLPSLGA) show a composition bias toward low complexity.

The protein belongs to the major royal jelly protein family.

The protein localises to the secreted. In terms of biological role, controls the pigmentation pattern of the adult cuticle and larval mouth parts. This Drosophila pseudoobscura pseudoobscura (Fruit fly) protein is Protein yellow (y).